The following is a 411-amino-acid chain: Tyrosine--tRNA ligase (411 aa).

Tyr34 is an L-tyrosine binding site. The 'HIGH' region motif lies at 39–48 (CTATSLHIGS). Tyr171 and Gln175 together coordinate L-tyrosine. Positions 231–235 (KMGKT) match the 'KMSKS' region motif. Lys234 contacts ATP. The region spanning 345–411 (ISAYELFYEA…GKKRHILVRV (67 aa)) is the S4 RNA-binding domain.

The protein belongs to the class-I aminoacyl-tRNA synthetase family. TyrS type 1 subfamily. As to quaternary structure, homodimer.

The protein localises to the cytoplasm. The enzyme catalyses tRNA(Tyr) + L-tyrosine + ATP = L-tyrosyl-tRNA(Tyr) + AMP + diphosphate + H(+). In terms of biological role, catalyzes the attachment of tyrosine to tRNA(Tyr) in a two-step reaction: tyrosine is first activated by ATP to form Tyr-AMP and then transferred to the acceptor end of tRNA(Tyr). The protein is Tyrosine--tRNA ligase of Rickettsia rickettsii (strain Sheila Smith).